Reading from the N-terminus, the 192-residue chain is Ion-translocating oxidoreductase complex subunit A (192 aa).

6 helical membrane passes run 5–25 (LLLLISTVLVNNFVLVKFLGL), 39–59 (IGMSMATTFVLTLASILSYLV), 65–85 (LPFDLSYLRTMSFILVIAVVV), 102–122 (ALGIYLPLITTNCAVLGVALL), 134–154 (AIYGFGAAVGFSLVLILFSAM), and 171–191 (AIAMITAGLMSLAFMGFTGLV).

It belongs to the NqrDE/RnfAE family. As to quaternary structure, the complex is composed of six subunits: RnfA, RnfB, RnfC, RnfD, RnfE and RnfG.

The protein resides in the cell inner membrane. Part of a membrane-bound complex that couples electron transfer with translocation of ions across the membrane. The chain is Ion-translocating oxidoreductase complex subunit A from Shewanella putrefaciens (strain CN-32 / ATCC BAA-453).